The chain runs to 294 residues: 4-hydroxybenzoate octaprenyltransferase (294 aa).

The next 8 membrane-spanning stretches (helical) occupy residues 20 to 42, 98 to 118, 120 to 140, 145 to 165, 175 to 195, 218 to 238, 242 to 262, and 274 to 294; these read LLRI…ALWL, WEAV…VVLF, NTLT…YPFM, HLPQ…AWAA, WLLF…YAMV, AIIA…GQRA, SFYY…QYLA, and FLNN…DLAF.

Belongs to the UbiA prenyltransferase family. The cofactor is Mg(2+).

It is found in the cell inner membrane. The enzyme catalyses all-trans-octaprenyl diphosphate + 4-hydroxybenzoate = 4-hydroxy-3-(all-trans-octaprenyl)benzoate + diphosphate. It functions in the pathway cofactor biosynthesis; ubiquinone biosynthesis. In terms of biological role, catalyzes the prenylation of para-hydroxybenzoate (PHB) with an all-trans polyprenyl group. Mediates the second step in the final reaction sequence of ubiquinone-8 (UQ-8) biosynthesis, which is the condensation of the polyisoprenoid side chain with PHB, generating the first membrane-bound Q intermediate 3-octaprenyl-4-hydroxybenzoate. This chain is 4-hydroxybenzoate octaprenyltransferase, found in Marinobacter nauticus (strain ATCC 700491 / DSM 11845 / VT8) (Marinobacter aquaeolei).